Reading from the N-terminus, the 568-residue chain is Putative ABC transporter ATP-binding protein CPE1583 (568 aa).

ABC transporter domains follow at residues 7–248 (IEFK…GIRE) and 303–536 (LEFK…ASLK). ATP contacts are provided by residues 41 to 48 (GPSGSGKS) and 336 to 343 (GKNGAGKS).

This sequence belongs to the ABC transporter superfamily.

Its subcellular location is the cell membrane. In terms of biological role, probably part of an ABC transporter complex. Responsible for energy coupling to the transport system. The chain is Putative ABC transporter ATP-binding protein CPE1583 from Clostridium perfringens (strain 13 / Type A).